A 153-amino-acid chain; its full sequence is Profilin (153 aa).

This sequence belongs to the profilin family. Occurs in many kinds of cells as a complex with monomeric actin in a 1:1 ratio.

The protein localises to the cytoplasm. It is found in the cytoskeleton. Functionally, binds to actin and affects the structure of the cytoskeleton. At high concentrations, profilin prevents the polymerization of actin, whereas it enhances it at low concentrations. By binding to PIP2, it inhibits the formation of IP3 and DG. The polypeptide is Profilin (Tetrahymena pyriformis).